A 123-amino-acid chain; its full sequence is MAITKEDILEAVAGLTVMELNDLVKAFEEKFGVSAAAVAVAGPAGAGAAAAEEKTEFDVVLSAAGDNKVGVIKVVRAITGLGLKEAKDLVDGAPKNVKEGVAKAEAEDIVKQLTEAGAKAEIK.

The protein belongs to the bacterial ribosomal protein bL12 family. As to quaternary structure, homodimer. Part of the ribosomal stalk of the 50S ribosomal subunit. Forms a multimeric L10(L12)X complex, where L10 forms an elongated spine to which 2 to 4 L12 dimers bind in a sequential fashion. Binds GTP-bound translation factors.

In terms of biological role, forms part of the ribosomal stalk which helps the ribosome interact with GTP-bound translation factors. Is thus essential for accurate translation. This Chromobacterium violaceum (strain ATCC 12472 / DSM 30191 / JCM 1249 / CCUG 213 / NBRC 12614 / NCIMB 9131 / NCTC 9757 / MK) protein is Large ribosomal subunit protein bL12.